We begin with the raw amino-acid sequence, 590 residues long: uncharacterized protein (590 aa).

2 disordered regions span residues 306-329 (IAEPQTHTGGADRQRPQRPDGIPY) and 528-590 (QPAP…LMNL). Over residues 543–563 (PSLPQPVPEPLAPQEPPPPGT) the composition is skewed to pro residues.

This is an uncharacterized protein from Ictaluridae (bullhead catfishes).